Consider the following 151-residue polypeptide: Deoxyuridine 5'-triphosphate nucleotidohydrolase (151 aa).

Substrate-binding positions include R70–G72, N83, L87–D89, and M97.

The protein belongs to the dUTPase family. Requires Mg(2+) as cofactor.

It carries out the reaction dUTP + H2O = dUMP + diphosphate + H(+). It functions in the pathway pyrimidine metabolism; dUMP biosynthesis; dUMP from dCTP (dUTP route): step 2/2. This enzyme is involved in nucleotide metabolism: it produces dUMP, the immediate precursor of thymidine nucleotides and it decreases the intracellular concentration of dUTP so that uracil cannot be incorporated into DNA. This is Deoxyuridine 5'-triphosphate nucleotidohydrolase from Pseudomonas putida (strain ATCC 47054 / DSM 6125 / CFBP 8728 / NCIMB 11950 / KT2440).